Consider the following 336-residue polypeptide: Lipoyl synthase (336 aa).

7 residues coordinate [4Fe-4S] cluster: Cys-81, Cys-86, Cys-92, Cys-107, Cys-111, Cys-114, and Ser-323. The Radical SAM core domain maps to 93–312 (FGHGTATFMI…EDYGYELGFS (220 aa)).

It belongs to the radical SAM superfamily. Lipoyl synthase family. It depends on [4Fe-4S] cluster as a cofactor.

The protein resides in the cytoplasm. The catalysed reaction is [[Fe-S] cluster scaffold protein carrying a second [4Fe-4S](2+) cluster] + N(6)-octanoyl-L-lysyl-[protein] + 2 oxidized [2Fe-2S]-[ferredoxin] + 2 S-adenosyl-L-methionine + 4 H(+) = [[Fe-S] cluster scaffold protein] + N(6)-[(R)-dihydrolipoyl]-L-lysyl-[protein] + 4 Fe(3+) + 2 hydrogen sulfide + 2 5'-deoxyadenosine + 2 L-methionine + 2 reduced [2Fe-2S]-[ferredoxin]. Its pathway is protein modification; protein lipoylation via endogenous pathway; protein N(6)-(lipoyl)lysine from octanoyl-[acyl-carrier-protein]: step 2/2. In terms of biological role, catalyzes the radical-mediated insertion of two sulfur atoms into the C-6 and C-8 positions of the octanoyl moiety bound to the lipoyl domains of lipoate-dependent enzymes, thereby converting the octanoylated domains into lipoylated derivatives. The sequence is that of Lipoyl synthase from Stenotrophomonas maltophilia (strain R551-3).